We begin with the raw amino-acid sequence, 208 residues long: Small ribosomal subunit protein uS9c (208 aa).

The transit peptide at 1–51 directs the protein to the chloroplast; the sequence is MAVSISSLTSSFASLSFTSNLTPKPQTLPMARTKPFSLSNPAVVKPLVITA. N-acetylthreonine is present on T52. Residues 185–208 are disordered; the sequence is DSRIVERKKPGLKKARKAPQFSKR. Residues 194 to 208 are compositionally biased toward basic residues; that stretch reads PGLKKARKAPQFSKR.

Component of the chloroplast small ribosomal subunit (SSU). Mature 70S chloroplast ribosomes of higher plants consist of a small (30S) and a large (50S) subunit. The 30S small subunit contains 1 molecule of ribosomal RNA (16S rRNA) and 24 different proteins. The 50S large subunit contains 3 rRNA molecules (23S, 5S and 4.5S rRNA) and 33 different proteins. uS9c binds directly to 16S ribosomal RNA. uS9c interacts with translation factor pY (PSRP1).

The protein resides in the plastid. It is found in the chloroplast. Its function is as follows. Component of the chloroplast ribosome (chloro-ribosome), a dedicated translation machinery responsible for the synthesis of chloroplast genome-encoded proteins, including proteins of the transcription and translation machinery and components of the photosynthetic apparatus. This chain is Small ribosomal subunit protein uS9c (PRPS9), found in Spinacia oleracea (Spinach).